We begin with the raw amino-acid sequence, 427 residues long: Glutamate-1-semialdehyde 2,1-aminomutase (427 aa).

K265 is subject to N6-(pyridoxal phosphate)lysine.

Belongs to the class-III pyridoxal-phosphate-dependent aminotransferase family. HemL subfamily. As to quaternary structure, homodimer. Pyridoxal 5'-phosphate is required as a cofactor.

Its subcellular location is the cytoplasm. It carries out the reaction (S)-4-amino-5-oxopentanoate = 5-aminolevulinate. It participates in porphyrin-containing compound metabolism; protoporphyrin-IX biosynthesis; 5-aminolevulinate from L-glutamyl-tRNA(Glu): step 2/2. The polypeptide is Glutamate-1-semialdehyde 2,1-aminomutase (Edwardsiella ictaluri (strain 93-146)).